A 514-amino-acid chain; its full sequence is Photosystem II CP47 reaction center protein (514 aa).

A run of 6 helical transmembrane segments spans residues 21-36 (AVHL…WAGS), 109-123 (IVLS…VWHW), 148-164 (GGHL…FGTF), 211-226 (IAAG…FHLT), 245-260 (ALAS…AFVV), and 465-480 (CFAL…HGAR).

The protein belongs to the PsbB/PsbC family. PsbB subfamily. PSII is composed of 1 copy each of membrane proteins PsbA, PsbB, PsbC, PsbD, PsbE, PsbF, PsbH, PsbI, PsbJ, PsbK, PsbL, PsbM, PsbT, PsbX, PsbY, PsbZ, Psb30/Ycf12, peripheral proteins PsbO, CyanoQ (PsbQ), PsbU, PsbV and a large number of cofactors. It forms dimeric complexes. It depends on Binds multiple chlorophylls. PSII binds additional chlorophylls, carotenoids and specific lipids. as a cofactor.

Its subcellular location is the cellular thylakoid membrane. Functionally, one of the components of the core complex of photosystem II (PSII). It binds chlorophyll and helps catalyze the primary light-induced photochemical processes of PSII. PSII is a light-driven water:plastoquinone oxidoreductase, using light energy to abstract electrons from H(2)O, generating O(2) and a proton gradient subsequently used for ATP formation. The chain is Photosystem II CP47 reaction center protein from Prochlorothrix hollandica.